Here is a 257-residue protein sequence, read N- to C-terminus: Diaminopimelate epimerase (257 aa).

Substrate contacts are provided by Asn-13, Gln-46, and Asn-66. Cys-75 acts as the Proton donor in catalysis. Substrate contacts are provided by residues 76 to 77, Asn-145, Asn-175, and 193 to 194; these read GN and ER. Residue Cys-202 is the Proton acceptor of the active site. Residue 203 to 204 participates in substrate binding; it reads GS.

Belongs to the diaminopimelate epimerase family. Homodimer.

The protein resides in the cytoplasm. The enzyme catalyses (2S,6S)-2,6-diaminopimelate = meso-2,6-diaminopimelate. It participates in amino-acid biosynthesis; L-lysine biosynthesis via DAP pathway; DL-2,6-diaminopimelate from LL-2,6-diaminopimelate: step 1/1. In terms of biological role, catalyzes the stereoinversion of LL-2,6-diaminopimelate (L,L-DAP) to meso-diaminopimelate (meso-DAP), a precursor of L-lysine and an essential component of the bacterial peptidoglycan. This chain is Diaminopimelate epimerase, found in Gluconobacter oxydans (strain 621H) (Gluconobacter suboxydans).